The following is a 346-amino-acid chain: Nitrilase 1 (346 aa).

Residue Ser-2 is modified to N-acetylserine. In terms of domain architecture, CN hydrolase spans Val-25 to Leu-297. Glu-65 (proton acceptor) is an active-site residue. The Proton donor role is filled by Lys-152. Cys-186 functions as the Nucleophile in the catalytic mechanism.

This sequence belongs to the carbon-nitrogen hydrolase superfamily. Nitrilase family. Interacts with DEK3. In terms of tissue distribution, expressed in cotyledons, hypocotyls, leaves, roots, stems, flowers and siliques.

The catalysed reaction is a nitrile + 2 H2O = a carboxylate + NH4(+). In terms of biological role, can convert indole-3-acetonitrile to the plant hormone indole-3-acetic acid. This chain is Nitrilase 1, found in Arabidopsis thaliana (Mouse-ear cress).